The following is a 489-amino-acid chain: Betaine aldehyde dehydrogenase (489 aa).

The K(+) site is built by Thr26 and Asp93. 150-152 (GAW) lines the NAD(+) pocket. The active-site Charge relay system is the Lys162. 176–179 (KPSE) provides a ligand contact to NAD(+). Val180 contributes to the K(+) binding site. Residue 229-232 (GVET) coordinates NAD(+). Leu245 contributes to the K(+) binding site. The active-site Proton acceptor is the Glu251. NAD(+)-binding residues include Gly253, Cys285, and Glu386. The active-site Nucleophile is Cys285. Residue Cys285 is modified to Cysteine sulfenic acid (-SOH). K(+)-binding residues include Lys456 and Gly459. Glu463 acts as the Charge relay system in catalysis.

The protein belongs to the aldehyde dehydrogenase family. As to quaternary structure, dimer of dimers. Requires K(+) as cofactor.

It carries out the reaction betaine aldehyde + NAD(+) + H2O = glycine betaine + NADH + 2 H(+). It functions in the pathway amine and polyamine biosynthesis; betaine biosynthesis via choline pathway; betaine from betaine aldehyde: step 1/1. Functionally, involved in the biosynthesis of the osmoprotectant glycine betaine. Catalyzes the irreversible oxidation of betaine aldehyde to the corresponding acid. The chain is Betaine aldehyde dehydrogenase from Burkholderia multivorans (strain ATCC 17616 / 249).